A 745-amino-acid chain; its full sequence is Eukaryotic translation initiation factor 3 subunit B (745 aa).

Residues D41–D129 enclose the RRM domain. WD repeat units lie at residues E189 to R230, W251 to P293, G303 to K344, and G580 to H625. Positions G644–A745 form a coiled coil.

This sequence belongs to the eIF-3 subunit B family. Component of the eukaryotic translation initiation factor 3 (eIF-3) complex.

It localises to the cytoplasm. Functionally, RNA-binding component of the eukaryotic translation initiation factor 3 (eIF-3) complex, which is involved in protein synthesis of a specialized repertoire of mRNAs and, together with other initiation factors, stimulates binding of mRNA and methionyl-tRNAi to the 40S ribosome. The eIF-3 complex specifically targets and initiates translation of a subset of mRNAs involved in cell proliferation. This chain is Eukaryotic translation initiation factor 3 subunit B, found in Mycosarcoma maydis (Corn smut fungus).